The following is a 438-amino-acid chain: EF-hand calcium-binding domain-containing protein 3 (438 aa).

EF-hand domains are found at residues 47-82 and 83-118; these read SQMR…LGMN and LTKH…KNRF. Ca(2+) contacts are provided by Asp96, Asp98, Asp100, Lys102, and Asp107. Phosphotyrosine is present on Tyr279. Residues 413–438 form a disordered region; that stretch reads SSSDISECDTDTGRKRKRKGFKGFRQ. Residues 426 to 438 show a composition bias toward basic residues; sequence RKRKRKGFKGFRQ.

This Bos taurus (Bovine) protein is EF-hand calcium-binding domain-containing protein 3 (EFCAB3).